A 397-amino-acid polypeptide reads, in one-letter code: Serpin B10 (397 aa).

The Nuclear localization signal signature appears at 74–77; sequence KKRK.

Belongs to the serpin family. Ov-serpin subfamily.

It is found in the nucleus. The protein resides in the cytoplasm. Protease inhibitor that may play a role in the regulation of protease activities during hematopoiesis and apoptosis induced by TNF. May regulate protease activities in the cytoplasm and in the nucleus. The chain is Serpin B10 (Serpinb10) from Mus musculus (Mouse).